A 303-amino-acid chain; its full sequence is Peroxisomal trans-2-enoyl-CoA reductase (303 aa).

23-47 (VTGGATGIGKAIVKELLELGSNVVI) is a binding site for NADP(+). The residue at position 32 (Lys32) is an N6-succinyllysine. A Phosphoserine modification is found at Ser49. Tyr179 (proton acceptor) is an active-site residue. Tyr179 is modified (phosphotyrosine). A Microbody targeting signal motif is present at residues 301–303 (AKL).

This sequence belongs to the short-chain dehydrogenases/reductases (SDR) family. As to quaternary structure, interacts with PEX5, probably required to target it into peroxisomes.

It localises to the peroxisome. The enzyme catalyses a (2E)-enoyl-CoA + NADPH + H(+) = a 2,3-saturated acyl-CoA + NADP(+). It carries out the reaction (2E)-hexenoyl-CoA + NADPH + H(+) = hexanoyl-CoA + NADP(+). The catalysed reaction is (2E)-octenoyl-CoA + NADPH + H(+) = octanoyl-CoA + NADP(+). It catalyses the reaction (2E)-decenoyl-CoA + NADPH + H(+) = decanoyl-CoA + NADP(+). The enzyme catalyses (2E)-dodecenoyl-CoA + NADPH + H(+) = dodecanoyl-CoA + NADP(+). It carries out the reaction (2E)-tetradecenoyl-CoA + NADPH + H(+) = tetradecanoyl-CoA + NADP(+). Its pathway is lipid metabolism; fatty acid biosynthesis. In terms of biological role, participates in chain elongation of fatty acids. Catalyzes the reduction of trans-2-enoyl-CoAs of varying chain lengths from 6:1 to 16:1, having maximum activity with 10:1 CoA. Has no 2,4-dienoyl-CoA reductase activity. The chain is Peroxisomal trans-2-enoyl-CoA reductase (PECR) from Pongo abelii (Sumatran orangutan).